We begin with the raw amino-acid sequence, 156 residues long: IFN signaling evasion protein OPG029 (156 aa).

This sequence belongs to the orthopoxvirus OPG029 family. As to quaternary structure, interacts with host TANK, TBKBP1 and AZI2; these interactions prevent interferon production. Interacts with host STAT2.

Its function is as follows. Prevents establishment of cellular antiviral state by blocking virus-induced phosphorylation and activation of interferon regulatory factors 3/IRF3 and 7/IRF7, transcription factors critical for the induction of interferons alpha and beta. This blockage is produced through the inhibition of host TBK1, by binding host TBK1 adapter proteins TBKBP1 and AZI2, thereby producing a strong inhibition of the phosphorylation and activation of IRF3 and IRF7. Also acts as an inhibitor of the cellular response to type I IFN by interacting with host STAT2. Mechanistically, exerts its inhibitory effect after host ISGF3 complex (composed of STAT1, STAT2 and IRF9) binding to the interferon stimulated response element (ISRE). The sequence is that of IFN signaling evasion protein OPG029 (OPG029) from Variola virus (isolate Human/India/Ind3/1967) (VARV).